A 314-amino-acid chain; its full sequence is 1-aminocyclopropane-1-carboxylate oxidase 1 (314 aa).

A Fe2OG dioxygenase domain is found at 153–253 (PNFGTKVSNY…RMSIASFYNP (101 aa)). H177, D179, and H234 together coordinate Fe cation.

It belongs to the iron/ascorbate-dependent oxidoreductase family. In terms of assembly, monomer. Requires Fe cation as cofactor.

The catalysed reaction is 1-aminocyclopropane-1-carboxylate + L-ascorbate + O2 = ethene + L-dehydroascorbate + hydrogen cyanide + CO2 + 2 H2O. Its pathway is alkene biosynthesis; ethylene biosynthesis via S-adenosyl-L-methionine; ethylene from S-adenosyl-L-methionine: step 2/2. In Malus domestica (Apple), this protein is 1-aminocyclopropane-1-carboxylate oxidase 1.